The following is a 424-amino-acid chain: Riboflavin biosynthesis protein RibBA (424 aa).

The interval 1–204 (MTRFDSIERA…IADLIAWRRK (204 aa)) is DHBP synthase. D-ribulose 5-phosphate is bound by residues 28-29 (RE), Asp33, 141-145 (RPGHT), and Glu165. Glu29 lines the Mg(2+) pocket. Residue His144 coordinates Mg(2+). Residues 205–424 (HEKHVLRIAE…QNTAQPGTAL (220 aa)) form a GTP cyclohydrolase II region. 259 to 263 (RVHSE) lines the GTP pocket. Zn(2+) contacts are provided by Cys264, Cys275, and Cys277. Residues Gln280, 303 to 305 (EGR), and Thr325 each bind GTP. Asp337 serves as the catalytic Proton acceptor; for GTP cyclohydrolase activity. The active-site Nucleophile; for GTP cyclohydrolase activity is Arg339. Residues Thr360 and Lys365 each coordinate GTP.

It in the N-terminal section; belongs to the DHBP synthase family. The protein in the C-terminal section; belongs to the GTP cyclohydrolase II family. Mg(2+) serves as cofactor. The cofactor is Mn(2+). Zn(2+) is required as a cofactor.

The enzyme catalyses D-ribulose 5-phosphate = (2S)-2-hydroxy-3-oxobutyl phosphate + formate + H(+). It catalyses the reaction GTP + 4 H2O = 2,5-diamino-6-hydroxy-4-(5-phosphoribosylamino)-pyrimidine + formate + 2 phosphate + 3 H(+). It functions in the pathway cofactor biosynthesis; riboflavin biosynthesis; 2-hydroxy-3-oxobutyl phosphate from D-ribulose 5-phosphate: step 1/1. It participates in cofactor biosynthesis; riboflavin biosynthesis; 5-amino-6-(D-ribitylamino)uracil from GTP: step 1/4. In terms of biological role, catalyzes the conversion of D-ribulose 5-phosphate to formate and 3,4-dihydroxy-2-butanone 4-phosphate. Functionally, catalyzes the conversion of GTP to 2,5-diamino-6-ribosylamino-4(3H)-pyrimidinone 5'-phosphate (DARP), formate and pyrophosphate. The polypeptide is Riboflavin biosynthesis protein RibBA (Rhodococcus erythropolis (strain PR4 / NBRC 100887)).